The following is a 165-amino-acid chain: Xanthine-guanine phosphoribosyltransferase (165 aa).

Residues 41-42 and 98-106 contribute to the 5-phospho-alpha-D-ribose 1-diphosphate site; these read RG and DDLTDTGKT. Asp-99 contacts Mg(2+). The guanine site is built by Asp-102 and Ile-145. Xanthine is bound by residues Asp-102 and Ile-145. GMP contacts are provided by residues 102–106 and 144–145; these read DTGKT and WI.

It belongs to the purine/pyrimidine phosphoribosyltransferase family. XGPT subfamily. As to quaternary structure, homotetramer. Requires Mg(2+) as cofactor.

The protein localises to the cell inner membrane. The catalysed reaction is GMP + diphosphate = guanine + 5-phospho-alpha-D-ribose 1-diphosphate. It catalyses the reaction XMP + diphosphate = xanthine + 5-phospho-alpha-D-ribose 1-diphosphate. The enzyme catalyses IMP + diphosphate = hypoxanthine + 5-phospho-alpha-D-ribose 1-diphosphate. The protein operates within purine metabolism; GMP biosynthesis via salvage pathway; GMP from guanine: step 1/1. It participates in purine metabolism; XMP biosynthesis via salvage pathway; XMP from xanthine: step 1/1. Its function is as follows. Purine salvage pathway enzyme that catalyzes the transfer of the ribosyl-5-phosphate group from 5-phospho-alpha-D-ribose 1-diphosphate (PRPP) to the N9 position of the 6-oxopurines guanine and xanthine to form the corresponding ribonucleotides GMP (guanosine 5'-monophosphate) and XMP (xanthosine 5'-monophosphate), with the release of PPi. To a lesser extent, also acts on hypoxanthine. The sequence is that of Xanthine-guanine phosphoribosyltransferase from Chelativorans sp. (strain BNC1).